The sequence spans 920 residues: Isoleucine--tRNA ligase (920 aa).

The 'HIGH' region motif lies at 58-68; it reads PYANGHLHLGH. Glu-569 provides a ligand contact to L-isoleucyl-5'-AMP. The short motif at 610 to 614 is the 'KMSKS' region element; it reads KMSKS. Lys-613 is a binding site for ATP. Positions 895, 898, 910, and 913 each coordinate Zn(2+).

It belongs to the class-I aminoacyl-tRNA synthetase family. IleS type 1 subfamily. As to quaternary structure, monomer. Requires Zn(2+) as cofactor.

It localises to the cytoplasm. The enzyme catalyses tRNA(Ile) + L-isoleucine + ATP = L-isoleucyl-tRNA(Ile) + AMP + diphosphate. Its function is as follows. Catalyzes the attachment of isoleucine to tRNA(Ile). As IleRS can inadvertently accommodate and process structurally similar amino acids such as valine, to avoid such errors it has two additional distinct tRNA(Ile)-dependent editing activities. One activity is designated as 'pretransfer' editing and involves the hydrolysis of activated Val-AMP. The other activity is designated 'posttransfer' editing and involves deacylation of mischarged Val-tRNA(Ile). This is Isoleucine--tRNA ligase from Helicobacter pylori (strain ATCC 700392 / 26695) (Campylobacter pylori).